A 344-amino-acid chain; its full sequence is Glycerol-3-phosphate dehydrogenase [NAD(P)+] 2 (344 aa).

NADPH is bound by residues S12, W13, R33, R34, and K107. 3 residues coordinate sn-glycerol 3-phosphate: K107, G138, and S140. NADPH is bound at residue A142. Residues K193, D246, S256, R257, and N258 each contribute to the sn-glycerol 3-phosphate site. The active-site Proton acceptor is K193. R257 contributes to the NADPH binding site. NADPH contacts are provided by V281 and E283.

This sequence belongs to the NAD-dependent glycerol-3-phosphate dehydrogenase family.

Its subcellular location is the cytoplasm. It carries out the reaction sn-glycerol 3-phosphate + NAD(+) = dihydroxyacetone phosphate + NADH + H(+). The catalysed reaction is sn-glycerol 3-phosphate + NADP(+) = dihydroxyacetone phosphate + NADPH + H(+). The protein operates within membrane lipid metabolism; glycerophospholipid metabolism. In terms of biological role, catalyzes the reduction of the glycolytic intermediate dihydroxyacetone phosphate (DHAP) to sn-glycerol 3-phosphate (G3P), the key precursor for phospholipid synthesis. The polypeptide is Glycerol-3-phosphate dehydrogenase [NAD(P)+] 2 (Salinibacter ruber (strain DSM 13855 / M31)).